The chain runs to 517 residues: Glycerol kinase (517 aa).

An ADP-binding site is contributed by threonine 24. ATP is bound by residues threonine 24, threonine 25, and serine 26. Threonine 24 is a sn-glycerol 3-phosphate binding site. Arginine 28 provides a ligand contact to ADP. Sn-glycerol 3-phosphate-binding residues include arginine 94, glutamate 95, tyrosine 146, and aspartate 261. Residues arginine 94, glutamate 95, tyrosine 146, aspartate 261, and glutamine 262 each contribute to the glycerol site. ADP-binding residues include threonine 283 and glycine 327. 4 residues coordinate ATP: threonine 283, glycine 327, glutamine 331, and glycine 428. The ADP site is built by glycine 428 and asparagine 432.

Belongs to the FGGY kinase family.

It catalyses the reaction glycerol + ATP = sn-glycerol 3-phosphate + ADP + H(+). It functions in the pathway polyol metabolism; glycerol degradation via glycerol kinase pathway; sn-glycerol 3-phosphate from glycerol: step 1/1. Inhibited by fructose 1,6-bisphosphate (FBP). In terms of biological role, key enzyme in the regulation of glycerol uptake and metabolism. Catalyzes the phosphorylation of glycerol to yield sn-glycerol 3-phosphate. The protein is Glycerol kinase of Mycobacterium tuberculosis (strain ATCC 25177 / H37Ra).